A 324-amino-acid chain; its full sequence is MNSQVHRKGSIAEAVSAIQAHDKIVIFHHIRPDGDCLGAQHGLARLIQTNFPHKQVFCVGDPKHNFPWLEMVFTPKEQITPELMQQALAVIVDANYKERIECRDLLDQNQFKAVLRIDHHPNEDDLNTTHNFVDASYIAAAEQVVDLAVQAKWKLSPPAATALYLGIYTDSNRFLYSNTSWRTLYLGSMLYRAQANIAKIHDELNHTSLKDIQFKQYVFKNFQTFQNVIYFVADKKFQKKLKVTPLECARVNILANIEQFHIWLFFIEEGKNHYRVEFRSNGINVREVALKYGGGGHIQASGAVLKSKRDIIRVVQDCQKQIAV.

Belongs to the NrnA oligoribonuclease family. In terms of assembly, monomer or homodimer. Co(2+) serves as cofactor. It depends on Mn(2+) as a cofactor. Mg(2+) is required as a cofactor.

The enzyme catalyses adenosine 3',5'-bisphosphate + H2O = AMP + phosphate. Its function is as follows. Bifunctional enzyme which has both oligoribonuclease and pAp-phosphatase activities. Degrades RNA and DNA oligonucleotides with a length of 5 nucleotides and shorter, with a preference for longer oligomers. Also degrades 11- and 24-mers, but less efficiently. Directionality is controversial; shown to degrade 5-mers and less in a 3' to 5' direction, and 11-mers in a 5' to 3' direction. Converts 3'(2')-phosphoadenosine 5'-phosphate (PAP) to AMP. This chain is Bifunctional oligoribonuclease and PAP phosphatase NrnA (nrnA), found in Mycoplasma pneumoniae (strain ATCC 29342 / M129 / Subtype 1) (Mycoplasmoides pneumoniae).